The following is a 315-amino-acid chain: MSDSLRIIFAGTPDFAARHLDALLTSGHNVVGVFTQPDRPAGRGKKLMPSPVKVLAEEKGLPVFQPVSLRPQENQQLVADLHADVMVVVAYGLILPKAVLDMPRLGCINVHGSLLPRWRGAAPIQRSLWAGDAETGVTIMQMDVGLDTGDMLYKLACPITAEDTSGSLYNKLAELGPQGLITTLKQLADGTAAPEAQNEALVTHAEKLSKEEARIDWSLSAAQLERCIRAFNPWPMSWLEIDGQPVKVWQASVIEDATQSLPGTILAATKQGIQVATGKGILNLLSLQPAGKKAMSAQDLLNSRREWFIPGNRLA.

113–116 (SLLP) is a (6S)-5,6,7,8-tetrahydrofolate binding site.

It belongs to the Fmt family.

It carries out the reaction L-methionyl-tRNA(fMet) + (6R)-10-formyltetrahydrofolate = N-formyl-L-methionyl-tRNA(fMet) + (6S)-5,6,7,8-tetrahydrofolate + H(+). In terms of biological role, attaches a formyl group to the free amino group of methionyl-tRNA(fMet). The formyl group appears to play a dual role in the initiator identity of N-formylmethionyl-tRNA by promoting its recognition by IF2 and preventing the misappropriation of this tRNA by the elongation apparatus. This is Methionyl-tRNA formyltransferase from Salmonella dublin (strain CT_02021853).